The primary structure comprises 269 residues: Type II iodothyronine deiodinase (269 aa).

The Lumenal segment spans residues 1–9; that stretch reads MGILSVDLL. A helical; Signal-anchor for type III membrane protein membrane pass occupies residues 10-34; it reads ITLQILPVFFSNCLFLALYDSVILL. Residues 35–269 are Cytoplasmic-facing; sequence KHVVLLLSRS…KNFSKRUKLD (235 aa). The tract at residues 83-103 is disordered; that stretch reads NSSVVHVSSPEGGDTSGNGAQ. Residue selenocysteine 133 is part of the active site. Non-standard amino acids (selenocysteine) are located at selenocysteine 133 and selenocysteine 266.

Belongs to the iodothyronine deiodinase family. In terms of assembly, predominantly monomer. Can form homodimers but homodimerization is not essential for enzyme activity. Interacts with USP20 and USP33. Interacts with MARCHF6. In terms of processing, ubiquitinated by MARCHF6, leading to its degradation by the proteasome. Deubiquitinated by USP20 and USP33. In terms of tissue distribution, highly expressed in thyroid, mammary and pituitary glands, then in hypothalamus. Low levels detected in diaphragm, heart, kidney and lung.

Its subcellular location is the endoplasmic reticulum membrane. The catalysed reaction is 3,3',5-triiodo-L-thyronine + iodide + A + H(+) = L-thyroxine + AH2. It carries out the reaction 3,3'-diiodo-L-thyronine + iodide + A + H(+) = 3,3',5'-triiodo-L-thyronine + AH2. It catalyses the reaction 3'-iodo-L-thyronine + iodide + A + H(+) = 3',5'-diiodo-L-thyronine + AH2. The enzyme catalyses 3,3'-diiodothyronamine + iodide + A + H(+) = 3,3',5'-triiodothyronamine + AH2. The catalysed reaction is 3'-iodothyronamine + iodide + A + H(+) = 3',5'-diiodothyronamine + AH2. Functionally, plays a crucial role in the metabolism of thyroid hormones (TH) and has specific roles in TH activation and inactivation by deiodination. Catalyzes the deiodination of L-thyroxine (T4) to 3,5,3'-triiodothyronine (T3), 3,3',5'-triiodothyronine (rT3) to 3,3'-diiodothyronine (3,3'-T2) and 3',5'-diiodothyronine (3',5'-T2) to 3'-monoiodothyronine (3'-T1) via outer-ring deiodination (ORD). Catalyzes the phenolic ring deiodinations of 3,3',5'-triiodothyronamine and 3',5'- diiodothyronamine. The chain is Type II iodothyronine deiodinase (DIO2) from Bos taurus (Bovine).